A 310-amino-acid polypeptide reads, in one-letter code: Cytochrome f (310 aa).

A signal peptide spans 1 to 27 (MRRLLSPLFAALIVGVTVLTAPSTSWA). Heme contacts are provided by tyrosine 28, cysteine 48, cysteine 51, and histidine 52. A helical membrane pass occupies residues 277-297 (IYGLLAFFAAVALAQIMLVLK).

This sequence belongs to the cytochrome f family. The 4 large subunits of the cytochrome b6-f complex are cytochrome b6, subunit IV (17 kDa polypeptide, PetD), cytochrome f and the Rieske protein, while the 4 small subunits are PetG, PetL, PetM and PetN. The complex functions as a dimer. Heme serves as cofactor.

Its subcellular location is the cellular thylakoid membrane. Its function is as follows. Component of the cytochrome b6-f complex, which mediates electron transfer between photosystem II (PSII) and photosystem I (PSI), cyclic electron flow around PSI, and state transitions. The protein is Cytochrome f of Synechococcus sp. (strain WH7803).